The primary structure comprises 325 residues: Undecaprenyl-phosphate 4-deoxy-4-formamido-L-arabinose transferase (325 aa).

The next 2 membrane-spanning stretches (helical) occupy residues 235–255 and 269–291; these read LSVV…LLMV and VFTL…GLLG.

The protein belongs to the glycosyltransferase 2 family.

It is found in the cell inner membrane. It catalyses the reaction UDP-4-deoxy-4-formamido-beta-L-arabinose + di-trans,octa-cis-undecaprenyl phosphate = 4-deoxy-4-formamido-alpha-L-arabinopyranosyl di-trans,octa-cis-undecaprenyl phosphate + UDP. The protein operates within glycolipid biosynthesis; 4-amino-4-deoxy-alpha-L-arabinose undecaprenyl phosphate biosynthesis; 4-amino-4-deoxy-alpha-L-arabinose undecaprenyl phosphate from UDP-4-deoxy-4-formamido-beta-L-arabinose and undecaprenyl phosphate: step 1/2. It functions in the pathway bacterial outer membrane biogenesis; lipopolysaccharide biosynthesis. In terms of biological role, catalyzes the transfer of 4-deoxy-4-formamido-L-arabinose from UDP to undecaprenyl phosphate. The modified arabinose is attached to lipid A and is required for resistance to polymyxin and cationic antimicrobial peptides. Essential for virulence in insects. The chain is Undecaprenyl-phosphate 4-deoxy-4-formamido-L-arabinose transferase from Photorhabdus laumondii subsp. laumondii (strain DSM 15139 / CIP 105565 / TT01) (Photorhabdus luminescens subsp. laumondii).